We begin with the raw amino-acid sequence, 152 residues long: Transcriptional repressor NrdR (152 aa).

A zinc finger lies at 3–34 (CAFCGNPDTQVIDSRVSEDGSSIRRRRRCPAC). Residues 49-139 (PQVVKTAGHR…VYRSFQDISE (91 aa)) form the ATP-cone domain.

The protein belongs to the NrdR family. It depends on Zn(2+) as a cofactor.

Negatively regulates transcription of bacterial ribonucleotide reductase nrd genes and operons by binding to NrdR-boxes. The chain is Transcriptional repressor NrdR from Chromobacterium violaceum (strain ATCC 12472 / DSM 30191 / JCM 1249 / CCUG 213 / NBRC 12614 / NCIMB 9131 / NCTC 9757 / MK).